Consider the following 354-residue polypeptide: MEQNWFFPPHQGIRLGDLADRIGAELSDASVADHPIHGVAPVYRAKAGDVCYMLSRKSRDELESCQASAIICDKAIASIVPSRIPVLLTQKPHTAFALAGALLHGEALRPSYNTSLRGIAPGAFIDPTARLEPGVEVEPTAVVGAGAEIGSGTRIAAGAVIGPQVRIGRDCTISAGASILCALIGNNVIIHPGARIGQDGFGYAPGPKGGMIKIVQVGRVIIQDHVEIGANTTVDRGTMDDTVIGEGTKIDNLVQIGHNVRIGRYCGIVSQVGIAGSARIGDGVMIGGNAGVNGHTTIGDGAQIAAMSGVASDVPAGERYGGIPARPMRDFLREVAEIAMRSSERHKKKGGKDE.

The active-site Proton acceptor is histidine 258.

It belongs to the transferase hexapeptide repeat family. LpxD subfamily. In terms of assembly, homotrimer.

The enzyme catalyses a UDP-3-O-[(3R)-3-hydroxyacyl]-alpha-D-glucosamine + a (3R)-hydroxyacyl-[ACP] = a UDP-2-N,3-O-bis[(3R)-3-hydroxyacyl]-alpha-D-glucosamine + holo-[ACP] + H(+). It participates in bacterial outer membrane biogenesis; LPS lipid A biosynthesis. Catalyzes the N-acylation of UDP-3-O-acylglucosamine using 3-hydroxyacyl-ACP as the acyl donor. Is involved in the biosynthesis of lipid A, a phosphorylated glycolipid that anchors the lipopolysaccharide to the outer membrane of the cell. The polypeptide is UDP-3-O-acylglucosamine N-acyltransferase (Sinorhizobium fredii (strain NBRC 101917 / NGR234)).